Reading from the N-terminus, the 164-residue chain is Phosphopantetheine adenylyltransferase (164 aa).

Residue Ser-10 coordinates substrate. ATP is bound by residues 10-11 (SF) and His-18. The substrate site is built by Lys-42, Leu-74, and Arg-88. Residues 89-91 (GLR), Glu-99, and 124-130 (YSFLSSS) contribute to the ATP site.

This sequence belongs to the bacterial CoaD family. In terms of assembly, homohexamer. The cofactor is Mg(2+).

Its subcellular location is the cytoplasm. It catalyses the reaction (R)-4'-phosphopantetheine + ATP + H(+) = 3'-dephospho-CoA + diphosphate. It participates in cofactor biosynthesis; coenzyme A biosynthesis; CoA from (R)-pantothenate: step 4/5. In terms of biological role, reversibly transfers an adenylyl group from ATP to 4'-phosphopantetheine, yielding dephospho-CoA (dPCoA) and pyrophosphate. In Bacillus licheniformis (strain ATCC 14580 / DSM 13 / JCM 2505 / CCUG 7422 / NBRC 12200 / NCIMB 9375 / NCTC 10341 / NRRL NRS-1264 / Gibson 46), this protein is Phosphopantetheine adenylyltransferase.